The following is a 194-amino-acid chain: MYLINQNGWIEVICGSMFSGKSEELIRRVRRTQFAKQHAIVFKPCIDNRYSEEDVVSHNGLKVKAVPVSASKDIFKHITEEMDVIAIDEVQFFDGDIVEVVQVLANRGYRVIVAGLDQDFRGLPFGQVPQLMAIAEHVTKLQAVCSACGSPASRTQRLIDGEPAAFDDPIILVGASESYEPRCRHCHAVPTKQR.

ATP-binding positions include 15 to 22 and 88 to 91; these read GSMFSGKS and DEVQ. Glutamate 89 serves as the catalytic Proton acceptor. Zn(2+) contacts are provided by cysteine 145, cysteine 148, cysteine 183, and cysteine 186.

This sequence belongs to the thymidine kinase family. As to quaternary structure, homotetramer.

It localises to the cytoplasm. It carries out the reaction thymidine + ATP = dTMP + ADP + H(+). This Bacillus anthracis (strain A0248) protein is Thymidine kinase.